The primary structure comprises 132 residues: Small ribosomal subunit protein uS8 (132 aa).

This sequence belongs to the universal ribosomal protein uS8 family. Part of the 30S ribosomal subunit. Contacts proteins S5 and S12.

Its function is as follows. One of the primary rRNA binding proteins, it binds directly to 16S rRNA central domain where it helps coordinate assembly of the platform of the 30S subunit. In Aliarcobacter butzleri (strain RM4018) (Arcobacter butzleri), this protein is Small ribosomal subunit protein uS8.